The primary structure comprises 550 residues: Medium/long-chain-fatty-acid--CoA/3-oxocholest-4-en-26-oate--CoA ligase (550 aa).

Residues 178–186 (TGGTTGFPK), Asp-419, Arg-434, and Lys-525 contribute to the ATP site. The disordered stretch occupies residues 525 to 550 (KPDYRWAKEQTEARPADDVHAAHVSA).

It belongs to the ATP-dependent AMP-binding enzyme family.

The catalysed reaction is a medium-chain fatty acid + ATP + CoA = a medium-chain fatty acyl-CoA + AMP + diphosphate. It catalyses the reaction a long-chain fatty acid + ATP + CoA = a long-chain fatty acyl-CoA + AMP + diphosphate. The enzyme catalyses (25S)-3-oxocholest-4-en-26-oate + ATP + CoA = (25S)-3-oxocholest-4-en-26-oyl-CoA + AMP + diphosphate. The protein operates within lipid metabolism; fatty acid biosynthesis. It participates in steroid metabolism; cholesterol metabolism. In terms of biological role, catalyzes the activation of medium/long-chain fatty acids as acyl-coenzyme A (acyl-CoA), which are then transferred to the multifunctional polyketide synthase (PKS) type III for further chain extension. Also involved in the degradation of cholesterol via the degradation of the side chains of C-24 branched-chain sterols. Catalyzes the ATP-dependent CoA thioesterification of the sterol 3-oxocholest-4-en-26-oate to yield 3-oxocholest-4-en-26-oyl-CoA. This is Medium/long-chain-fatty-acid--CoA/3-oxocholest-4-en-26-oate--CoA ligase from Mycobacterium marinum (strain ATCC BAA-535 / M).